A 230-amino-acid polypeptide reads, in one-letter code: MAATETPGAAQKRVLRVLALHGYRQNERSFWERTGALRKRLRGRADLITFSAPLLVPDPDAEPGAGDPDSLQDESRGWWFSNPEQNSFDAMEESKTCSGLEAPLDTVAKAFSELGPFDGILGFSQGAALVAIICALKQQGDPRFHFDFAILVAGFKSLSTDHAKHYQQPITVPSLHVIGETDRVISAAMSQELVSHFENPVILMHSGGHYVPACAPQKKVYWEFLDKFLT.

Active-site charge relay system residues include Ser-124, Asp-182, and His-209.

The protein belongs to the LovG family.

The catalysed reaction is a carboxylic ester + H2O = an alcohol + a carboxylate + H(+). Its function is as follows. Exhibits ester hydrolase activity with a strong preference for long-chain alkyl ester substrates and high selectivity against a variety of short, branched, and substituted esters. Is able to hydrolyze ester bonds within a wide range of p-nitrophenyl derivatives (C2-C14) in vitro, with a strong preference toward substrates of &gt;8 carbons. The protein is Esterase OVCA2 (ovca2) of Xenopus tropicalis (Western clawed frog).